Reading from the N-terminus, the 229-residue chain is UPF0758 protein Moth_0536 (229 aa).

In terms of domain architecture, MPN spans 107-229 (VIRNPRDVAG…FTSLKERNLL (123 aa)). Zn(2+) is bound by residues H178, H180, and D191. Residues 178-191 (HNHPSGDPTPSQED) carry the JAMM motif motif.

It belongs to the UPF0758 family.

In Moorella thermoacetica (strain ATCC 39073 / JCM 9320), this protein is UPF0758 protein Moth_0536.